The sequence spans 441 residues: Peroxisome proliferator-activated receptor delta (441 aa).

The interval 1-58 (MEQPPGEAAEVREEEEKKEVAEAEGAPELNGGPERSLPSSSYTDLSRSSSPPSLLDQL) is disordered. A compositionally biased stretch (basic and acidic residues) spans 9 to 21 (AEVREEEEKKEVA). A compositionally biased stretch (low complexity) spans 36-55 (SLPSSSYTDLSRSSSPPSLL). Residues 70-145 (LNMECRVCGD…LGMSHNAIRF (76 aa)) constitute a DNA-binding region (nuclear receptor). NR C4-type zinc fingers lie at residues 74–94 (CRVC…CEGC) and 111–133 (CERI…FQKC). Residues 211–439 (FVIHDIETLW…HPLLQEIYKD (229 aa)) enclose the NR LBD domain.

This sequence belongs to the nuclear hormone receptor family. NR1 subfamily. Heterodimer with the retinoid X receptor. Interacts (via domain NR LBD) with CRY1 and CRY2 in a ligand-dependent manner. In terms of processing, 'Lys-48'-linked polyubiquitinated; leading to proteasomal degradation. Deubiquitinated and stabilized by OTUD3.

The protein resides in the nucleus. Its function is as follows. Ligand-activated transcription factor key mediator of energy metabolism in adipose tissues. Receptor that binds peroxisome proliferators such as hypolipidemic drugs and fatty acids. Has a preference for poly-unsaturated fatty acids, such as gamma-linoleic acid and eicosapentanoic acid. Once activated by a ligand, the receptor binds to promoter elements of target genes. Regulates the peroxisomal beta-oxidation pathway of fatty acids. Functions as a transcription activator for the acyl-CoA oxidase gene. Decreases expression of NPC1L1 once activated by a ligand. The protein is Peroxisome proliferator-activated receptor delta (PPARD) of Canis lupus familiaris (Dog).